The sequence spans 149 residues: MSIADNKKAFHDYFIEERFEAGLVLEGWEVKAIRAGRVQLKEAYVVVKNGAVYLIGCHISPLPTASTHIHPDPTRSRKLLLHAAEINKLIGKTERAGFTLVPLDMHYSKGRIKLEIGLAKGKKQHDKRAAEKDREWQREKQRLVRSAQH.

Residues G121–H149 are disordered. The segment covering K127–R142 has biased composition (basic and acidic residues).

This sequence belongs to the SmpB family.

It localises to the cytoplasm. Its function is as follows. Required for rescue of stalled ribosomes mediated by trans-translation. Binds to transfer-messenger RNA (tmRNA), required for stable association of tmRNA with ribosomes. tmRNA and SmpB together mimic tRNA shape, replacing the anticodon stem-loop with SmpB. tmRNA is encoded by the ssrA gene; the 2 termini fold to resemble tRNA(Ala) and it encodes a 'tag peptide', a short internal open reading frame. During trans-translation Ala-aminoacylated tmRNA acts like a tRNA, entering the A-site of stalled ribosomes, displacing the stalled mRNA. The ribosome then switches to translate the ORF on the tmRNA; the nascent peptide is terminated with the 'tag peptide' encoded by the tmRNA and targeted for degradation. The ribosome is freed to recommence translation, which seems to be the essential function of trans-translation. In Thiobacillus denitrificans (strain ATCC 25259 / T1), this protein is SsrA-binding protein.